The chain runs to 416 residues: GTPase Obg (416 aa).

Residues 1-157 form the Obg domain; sequence MFQDVLVITV…RRLRLELMLI (157 aa). Disordered regions lie at residues 25-44 and 62-82; these read EKFVPKGGPDGGDGGRGGSV and TYKAEDGEHGRGSQQHGRGGE. Gly residues predominate over residues 32–42; sequence GPDGGDGGRGG. The span at 63–72 shows a compositional bias: basic and acidic residues; that stretch reads YKAEDGEHGR. Positions 158–324 constitute an OBG-type G domain; sequence ADVGLVGYPN…LKEALHALVR (167 aa). GTP-binding positions include 164 to 171, 189 to 193, 211 to 214, 277 to 280, and 305 to 307; these read GYPNAGKS, FTTLS, DIPG, NKVD, and SAL. Mg(2+) contacts are provided by Ser171 and Thr191. The 79-residue stretch at 336 to 414 folds into the OCT domain; the sequence is PRKEVQAGVE…IGGLEFEYIP (79 aa).

It belongs to the TRAFAC class OBG-HflX-like GTPase superfamily. OBG GTPase family. Monomer. Mg(2+) is required as a cofactor.

It is found in the cytoplasm. Functionally, an essential GTPase which binds GTP, GDP and possibly (p)ppGpp with moderate affinity, with high nucleotide exchange rates and a fairly low GTP hydrolysis rate. Plays a role in control of the cell cycle, stress response, ribosome biogenesis and in those bacteria that undergo differentiation, in morphogenesis control. The chain is GTPase Obg from Thermus thermophilus (strain ATCC 27634 / DSM 579 / HB8).